The primary structure comprises 496 residues: Pseudooxynicotine dehydrogenase (496 aa).

Residues Met1 to Ala42 constitute a signal peptide (tat-type signal). 7 residues coordinate FAD: Ala69, Glu88, Arg96, Trp113, Val285, Ser461, and Ile471.

It belongs to the flavin monoamine oxidase family. As to quaternary structure, homodimer. Requires FAD as cofactor. Predicted to be exported by the Tat system. The position of the signal peptide cleavage has not been experimentally proven.

It localises to the periplasm. It catalyses the reaction pseudooxynicotine + 2 Fe(III)-[cytochrome c] + H2O = 4-oxo-4-(pyridin-3-yl)butanal + methylamine + 2 Fe(II)-[cytochrome c] + 2 H(+). Its pathway is alkaloid degradation; nicotine degradation. With respect to regulation, strongly inhibited by Na(2)MoO(4) and FeCl(3). Activity is nearly twice as high in the presence of Na(2)WO(4). Functionally, involved in nicotine degradation. Catalyzes the deamination of pseudooxynicotine to 3-succinoylsemialdehyde-pyridine. Functions as a dehydrogenase that uses the c-type cytochrome protein CycN as the physiological electron acceptor. O(2) is a poor electron acceptor. Pnao is oxidized by CycN 230 times faster than O(2) at equivalent oxidant concentrations. This is Pseudooxynicotine dehydrogenase from Pseudomonas putida (strain DSM 28022 / S16).